Reading from the N-terminus, the 478-residue chain is Spindle defective protein 3 (478 aa).

Topologically, residues 1 to 24 (MDQMTVEEKILEHQELEDGSSSFR) are cytoplasmic. A helical membrane pass occupies residues 25 to 45 (WLVSSTVIAIGGATVALYISG). Residues 46–52 (KIDWKIP) lie on the Extracellular side of the membrane. A helical transmembrane segment spans residues 53-73 (AIEAGLALTAGGTITCGYLWF). At 74–478 (KKRVKTVRKL…LRRVDDDIIE (405 aa)) the chain is on the cytoplasmic side.

It is found in the mitochondrion. Its subcellular location is the mitochondrion outer membrane. Functionally, in the first mitotic division in embryos, required for mitotic spindle alignment and asymmetric cell division. Required for motor-driven chromosome movement and homolog searching within the nucleus, and subsequently ensures homologous chromosome pairing during the prophase stage of meiosis. The polypeptide is Spindle defective protein 3 (Caenorhabditis elegans).